The sequence spans 94 residues: Pyrimidine/purine nucleoside phosphorylase (94 aa).

This sequence belongs to the nucleoside phosphorylase PpnP family.

The enzyme catalyses a purine D-ribonucleoside + phosphate = a purine nucleobase + alpha-D-ribose 1-phosphate. The catalysed reaction is adenosine + phosphate = alpha-D-ribose 1-phosphate + adenine. It catalyses the reaction cytidine + phosphate = cytosine + alpha-D-ribose 1-phosphate. It carries out the reaction guanosine + phosphate = alpha-D-ribose 1-phosphate + guanine. The enzyme catalyses inosine + phosphate = alpha-D-ribose 1-phosphate + hypoxanthine. The catalysed reaction is thymidine + phosphate = 2-deoxy-alpha-D-ribose 1-phosphate + thymine. It catalyses the reaction uridine + phosphate = alpha-D-ribose 1-phosphate + uracil. It carries out the reaction xanthosine + phosphate = alpha-D-ribose 1-phosphate + xanthine. Catalyzes the phosphorolysis of diverse nucleosides, yielding D-ribose 1-phosphate and the respective free bases. Can use uridine, adenosine, guanosine, cytidine, thymidine, inosine and xanthosine as substrates. Also catalyzes the reverse reactions. This chain is Pyrimidine/purine nucleoside phosphorylase, found in Salmonella typhimurium (strain LT2 / SGSC1412 / ATCC 700720).